We begin with the raw amino-acid sequence, 170 residues long: NADH-quinone oxidoreductase subunit B (170 aa).

The [4Fe-4S] cluster site is built by C37, C38, C102, and C131.

Belongs to the complex I 20 kDa subunit family. In terms of assembly, NDH-1 is composed of 14 different subunits. Subunits NuoB, C, D, E, F, and G constitute the peripheral sector of the complex. It depends on [4Fe-4S] cluster as a cofactor.

It is found in the cell inner membrane. It carries out the reaction a quinone + NADH + 5 H(+)(in) = a quinol + NAD(+) + 4 H(+)(out). NDH-1 shuttles electrons from NADH, via FMN and iron-sulfur (Fe-S) centers, to quinones in the respiratory chain. The immediate electron acceptor for the enzyme in this species is believed to be ubiquinone. Couples the redox reaction to proton translocation (for every two electrons transferred, four hydrogen ions are translocated across the cytoplasmic membrane), and thus conserves the redox energy in a proton gradient. The chain is NADH-quinone oxidoreductase subunit B from Geobacter sulfurreducens (strain ATCC 51573 / DSM 12127 / PCA).